The following is a 125-amino-acid chain: Glycine cleavage system H protein (125 aa).

In terms of domain architecture, Lipoyl-binding spans 22–103 (VFVVGITENA…AFTAWIFKIK (82 aa)). At Lys-63 the chain carries N6-lipoyllysine.

Belongs to the GcvH family. In terms of assembly, the glycine cleavage system is composed of four proteins: P, T, L and H. It depends on (R)-lipoate as a cofactor.

Functionally, the glycine cleavage system catalyzes the degradation of glycine. The H protein shuttles the methylamine group of glycine from the P protein to the T protein. This is Glycine cleavage system H protein from Bordetella avium (strain 197N).